We begin with the raw amino-acid sequence, 343 residues long: Isopentenyl-diphosphate delta-isomerase (343 aa).

6–7 provides a ligand contact to substrate; sequence RK. Residues Ser-63, 64 to 66, Ser-94, and Asn-122 each bind FMN; that span reads SMT. A substrate-binding site is contributed by 94–96; it reads SMR. Gln-157 lines the substrate pocket. Glu-158 provides a ligand contact to Mg(2+). FMN is bound by residues Lys-189, Thr-219, 269–271, and 290–291; these read GLK and AG.

Belongs to the IPP isomerase type 2 family. Homooctamer. Dimer of tetramers. It depends on FMN as a cofactor. Requires NADPH as cofactor. Mg(2+) serves as cofactor.

It is found in the cytoplasm. The enzyme catalyses isopentenyl diphosphate = dimethylallyl diphosphate. In terms of biological role, involved in the biosynthesis of isoprenoids. Catalyzes the 1,3-allylic rearrangement of the homoallylic substrate isopentenyl (IPP) to its allylic isomer, dimethylallyl diphosphate (DMAPP). In Rickettsia bellii (strain OSU 85-389), this protein is Isopentenyl-diphosphate delta-isomerase.